A 261-amino-acid polypeptide reads, in one-letter code: Putative glyoxylase CFP32 (261 aa).

2 VOC domains span residues 11–129 (TPNW…LWQA) and 143–257 (TLIW…VLKP). 2 glyoxalase regions span residues 13–123 (NWVD…TGAA) and 149–252 (LLTD…GAIF).

The protein is Putative glyoxylase CFP32 of Mycobacterium bovis (strain ATCC BAA-935 / AF2122/97).